The sequence spans 355 residues: uncharacterized protein (355 aa).

This is an uncharacterized protein from Aquifex aeolicus (strain VF5).